A 254-amino-acid polypeptide reads, in one-letter code: Ribonuclease PH (254 aa).

Phosphate-binding positions include R86 and 124–126 (GTR).

Belongs to the RNase PH family. In terms of assembly, homohexameric ring arranged as a trimer of dimers.

It catalyses the reaction tRNA(n+1) + phosphate = tRNA(n) + a ribonucleoside 5'-diphosphate. Phosphorolytic 3'-5' exoribonuclease that plays an important role in tRNA 3'-end maturation. Removes nucleotide residues following the 3'-CCA terminus of tRNAs; can also add nucleotides to the ends of RNA molecules by using nucleoside diphosphates as substrates, but this may not be physiologically important. Probably plays a role in initiation of 16S rRNA degradation (leading to ribosome degradation) during starvation. The protein is Ribonuclease PH of Carboxydothermus hydrogenoformans (strain ATCC BAA-161 / DSM 6008 / Z-2901).